Reading from the N-terminus, the 94-residue chain is Probable FAD-linked sulfhydryl oxidase FPV093 (94 aa).

An ERV/ALR sulfhydryl oxidase domain is found at 1–94 (MDPRYWGSSF…IDIKKVKKLI (94 aa)). Cys-41 and Cys-44 are disulfide-bonded.

This sequence belongs to the poxviruses E10 family. FAD serves as cofactor.

It carries out the reaction 2 R'C(R)SH + O2 = R'C(R)S-S(R)CR' + H2O2. FAD-dependent sulfhydryl oxidase that catalyzes disulfide bond formation. This chain is Probable FAD-linked sulfhydryl oxidase FPV093, found in Fowlpox virus (strain NVSL) (FPV).